The sequence spans 251 residues: Ubiquinone/menaquinone biosynthesis C-methyltransferase UbiE (251 aa).

Residues T74, D95, 123-124, and S140 each bind S-adenosyl-L-methionine; that span reads NA.

This sequence belongs to the class I-like SAM-binding methyltransferase superfamily. MenG/UbiE family.

It carries out the reaction a 2-demethylmenaquinol + S-adenosyl-L-methionine = a menaquinol + S-adenosyl-L-homocysteine + H(+). The catalysed reaction is a 2-methoxy-6-(all-trans-polyprenyl)benzene-1,4-diol + S-adenosyl-L-methionine = a 5-methoxy-2-methyl-3-(all-trans-polyprenyl)benzene-1,4-diol + S-adenosyl-L-homocysteine + H(+). The protein operates within quinol/quinone metabolism; menaquinone biosynthesis; menaquinol from 1,4-dihydroxy-2-naphthoate: step 2/2. It functions in the pathway cofactor biosynthesis; ubiquinone biosynthesis. Functionally, methyltransferase required for the conversion of demethylmenaquinol (DMKH2) to menaquinol (MKH2) and the conversion of 2-polyprenyl-6-methoxy-1,4-benzoquinol (DDMQH2) to 2-polyprenyl-3-methyl-6-methoxy-1,4-benzoquinol (DMQH2). This Citrobacter koseri (strain ATCC BAA-895 / CDC 4225-83 / SGSC4696) protein is Ubiquinone/menaquinone biosynthesis C-methyltransferase UbiE.